The chain runs to 134 residues: Holo-[acyl-carrier-protein] synthase (134 aa).

Residues aspartate 8 and glutamate 57 each contribute to the Mg(2+) site.

This sequence belongs to the P-Pant transferase superfamily. AcpS family. It depends on Mg(2+) as a cofactor.

Its subcellular location is the cytoplasm. The enzyme catalyses apo-[ACP] + CoA = holo-[ACP] + adenosine 3',5'-bisphosphate + H(+). In terms of biological role, transfers the 4'-phosphopantetheine moiety from coenzyme A to a Ser of acyl-carrier-protein. The polypeptide is Holo-[acyl-carrier-protein] synthase (Rhizobium rhizogenes (strain K84 / ATCC BAA-868) (Agrobacterium radiobacter)).